We begin with the raw amino-acid sequence, 125 residues long: Hydrogenase maturation factor HypA (125 aa).

His-2 contributes to the Ni(2+) binding site. Zn(2+)-binding residues include Cys-73, Cys-76, Cys-96, and Cys-99.

It belongs to the HypA/HybF family.

Functionally, involved in the maturation of [NiFe] hydrogenases. Required for nickel insertion into the metal center of the hydrogenase. The chain is Hydrogenase maturation factor HypA from Methanobrevibacter smithii (strain ATCC 35061 / DSM 861 / OCM 144 / PS).